Consider the following 892-residue polypeptide: Translation initiation factor IF-2 (892 aa).

The interval 88 to 304 (KKRTFVKRDP…SSLQQGFQKP (217 aa)) is disordered. 2 stretches are compositionally biased toward basic and acidic residues: residues 93-159 (VKRD…KDKV) and 166-216 (DMTK…EENK). Over residues 254–269 (GRGRNAKAARPAKKGK) the composition is skewed to basic residues. The segment covering 270-282 (HAESKADREEARA) has biased composition (basic and acidic residues). Residues 391-560 (PRAPVVTIMG…LLQAEVLELK (170 aa)) form the tr-type G domain. Residues 400–407 (GHVDHGKT) form a G1 region. GTP is bound at residue 400 to 407 (GHVDHGKT). A G2 region spans residues 425–429 (GITQH). Positions 446 to 449 (DTPG) are G3. GTP-binding positions include 446-450 (DTPGH) and 500-503 (NKID). Residues 500-503 (NKID) are G4. The tract at residues 536–538 (SAK) is G5.

The protein belongs to the TRAFAC class translation factor GTPase superfamily. Classic translation factor GTPase family. IF-2 subfamily.

It localises to the cytoplasm. In terms of biological role, one of the essential components for the initiation of protein synthesis. Protects formylmethionyl-tRNA from spontaneous hydrolysis and promotes its binding to the 30S ribosomal subunits. Also involved in the hydrolysis of GTP during the formation of the 70S ribosomal complex. The sequence is that of Translation initiation factor IF-2 from Salmonella choleraesuis (strain SC-B67).